The chain runs to 651 residues: Protein transport protein SEC9 (651 aa).

Disordered regions lie at residues 1 to 22 (MGLK…QNKD), 53 to 299 (AEDK…QAPM), and 313 to 332 (RNSE…DFEE). Phosphoserine occurs at positions 79 and 92. Over residues 86 to 112 (NEATAGSNRGSSGTQDLGNGAESNSMQ) the composition is skewed to polar residues. Over residues 120-129 (DDYRYDDDPY) the composition is skewed to basic and acidic residues. Composition is skewed to polar residues over residues 157–218 (GTSL…SLDQ) and 244–284 (DSNT…ANPY). Ser-186, Ser-190, Ser-213, Ser-271, and Ser-273 each carry phosphoserine. Residues 285–296 (SSRSVRQPQSQQ) show a composition bias toward low complexity. Basic and acidic residues predominate over residues 313-327 (RNSEVDLNEEPRTGE). At Ser-315 the chain carries Phosphoserine. Phosphothreonine is present on Thr-355. Ser-359 carries the post-translational modification Phosphoserine. 2 consecutive t-SNARE coiled-coil homology domains span residues 434–496 (KFTK…VAEL) and 588–650 (DEME…LAGI).

The protein belongs to the SNAP-25 family. Interacts with SRO7 and SRO77.

Functionally, component of a SNARE complex that may be the effector of SEC4 function in exocytosis. This Saccharomyces cerevisiae (strain ATCC 204508 / S288c) (Baker's yeast) protein is Protein transport protein SEC9 (SEC9).